The following is a 175-amino-acid chain: Ribosome maturation factor RimM (175 aa).

The 74-residue stretch at 100–173 folds into the PRC barrel domain; sequence EGEYYFHEII…IIIIRPMEGL (74 aa).

This sequence belongs to the RimM family. Binds ribosomal protein uS19.

It localises to the cytoplasm. Functionally, an accessory protein needed during the final step in the assembly of 30S ribosomal subunit, possibly for assembly of the head region. Essential for efficient processing of 16S rRNA. May be needed both before and after RbfA during the maturation of 16S rRNA. It has affinity for free ribosomal 30S subunits but not for 70S ribosomes. The polypeptide is Ribosome maturation factor RimM (Geobacillus thermodenitrificans (strain NG80-2)).